The following is a 111-amino-acid chain: Aspartate 1-decarboxylase (111 aa).

S25 serves as the catalytic Schiff-base intermediate with substrate; via pyruvic acid. Position 25 is a pyruvic acid (Ser) (S25). Residue T57 participates in substrate binding. Residue Y58 is the Proton donor of the active site. 73 to 75 (GPA) provides a ligand contact to substrate.

This sequence belongs to the PanD family. As to quaternary structure, heterooctamer of four alpha and four beta subunits. Requires pyruvate as cofactor. Post-translationally, is synthesized initially as an inactive proenzyme, which is activated by self-cleavage at a specific serine bond to produce a beta-subunit with a hydroxyl group at its C-terminus and an alpha-subunit with a pyruvoyl group at its N-terminus.

Its subcellular location is the cytoplasm. It carries out the reaction L-aspartate + H(+) = beta-alanine + CO2. It participates in cofactor biosynthesis; (R)-pantothenate biosynthesis; beta-alanine from L-aspartate: step 1/1. Functionally, catalyzes the pyruvoyl-dependent decarboxylation of aspartate to produce beta-alanine. In Coxiella burnetii (strain RSA 493 / Nine Mile phase I), this protein is Aspartate 1-decarboxylase.